The chain runs to 178 residues: MORN repeat-containing protein 5 (178 aa).

3 MORN repeats span residues 8–30 (YDGDYNNGRMEGTGEYTIPTHTR), 31–53 (YVGEMKDGMFHGKGVLHFPNGSK), and 54–75 (YEGTWEKGICKEGKYTFSDGLK).

It localises to the cell projection. Its subcellular location is the cilium. The protein localises to the flagellum. This Danio rerio (Zebrafish) protein is MORN repeat-containing protein 5 (morn5).